A 100-amino-acid chain; its full sequence is Large ribosomal subunit protein uL23 (100 aa).

Belongs to the universal ribosomal protein uL23 family. In terms of assembly, part of the 50S ribosomal subunit. Contacts protein L29, and trigger factor when it is bound to the ribosome.

Functionally, one of the early assembly proteins it binds 23S rRNA. One of the proteins that surrounds the polypeptide exit tunnel on the outside of the ribosome. Forms the main docking site for trigger factor binding to the ribosome. In Mycolicibacterium gilvum (strain PYR-GCK) (Mycobacterium gilvum (strain PYR-GCK)), this protein is Large ribosomal subunit protein uL23.